A 633-amino-acid chain; its full sequence is Glutamyl-tRNA(Gln) amidotransferase subunit E (633 aa).

It belongs to the GatB/GatE family. GatE subfamily. In terms of assembly, heterodimer of GatD and GatE.

It catalyses the reaction L-glutamyl-tRNA(Gln) + L-glutamine + ATP + H2O = L-glutaminyl-tRNA(Gln) + L-glutamate + ADP + phosphate + H(+). Its function is as follows. Allows the formation of correctly charged Gln-tRNA(Gln) through the transamidation of misacylated Glu-tRNA(Gln) in organisms which lack glutaminyl-tRNA synthetase. The reaction takes place in the presence of glutamine and ATP through an activated gamma-phospho-Glu-tRNA(Gln). The GatDE system is specific for glutamate and does not act on aspartate. In Saccharolobus islandicus (strain L.S.2.15 / Lassen #1) (Sulfolobus islandicus), this protein is Glutamyl-tRNA(Gln) amidotransferase subunit E.